The following is a 219-amino-acid chain: Orotate phosphoribosyltransferase (219 aa).

5-phospho-alpha-D-ribose 1-diphosphate is bound at residue Lys26. Residue 34-35 (FF) coordinates orotate. Residues 72–73 (YK), Arg98, Lys99, Lys102, His104, and 124–132 (DDVITAGTA) each bind 5-phospho-alpha-D-ribose 1-diphosphate. Residues Thr128 and Arg156 each contribute to the orotate site.

It belongs to the purine/pyrimidine phosphoribosyltransferase family. PyrE subfamily. In terms of assembly, homodimer. Mg(2+) is required as a cofactor.

It catalyses the reaction orotidine 5'-phosphate + diphosphate = orotate + 5-phospho-alpha-D-ribose 1-diphosphate. It participates in pyrimidine metabolism; UMP biosynthesis via de novo pathway; UMP from orotate: step 1/2. In terms of biological role, catalyzes the transfer of a ribosyl phosphate group from 5-phosphoribose 1-diphosphate to orotate, leading to the formation of orotidine monophosphate (OMP). This is Orotate phosphoribosyltransferase from Xanthomonas axonopodis pv. citri (strain 306).